Reading from the N-terminus, the 379-residue chain is Cytochrome b (379 aa).

4 helical membrane-spanning segments follow: residues 33–53 (FGSL…FLAM), 77–98 (WLIR…FIHV), 113–133 (WNIG…GYVL), and 178–198 (FFAF…VHLL). Heme b-binding residues include His83 and His97. Positions 182 and 196 each coordinate heme b. Residue His201 participates in a ubiquinone binding. 4 helical membrane passes run 226-246 (IKDL…ALFF), 288-308 (LGGV…PLLN), 320-340 (VTQT…WIGG), and 347-367 (FTMI…ILIP).

The protein belongs to the cytochrome b family. In terms of assembly, the cytochrome bc1 complex contains 11 subunits: 3 respiratory subunits (MT-CYB, CYC1 and UQCRFS1), 2 core proteins (UQCRC1 and UQCRC2) and 6 low-molecular weight proteins (UQCRH/QCR6, UQCRB/QCR7, UQCRQ/QCR8, UQCR10/QCR9, UQCR11/QCR10 and a cleavage product of UQCRFS1). This cytochrome bc1 complex then forms a dimer. Heme b is required as a cofactor.

It localises to the mitochondrion inner membrane. In terms of biological role, component of the ubiquinol-cytochrome c reductase complex (complex III or cytochrome b-c1 complex) that is part of the mitochondrial respiratory chain. The b-c1 complex mediates electron transfer from ubiquinol to cytochrome c. Contributes to the generation of a proton gradient across the mitochondrial membrane that is then used for ATP synthesis. This is Cytochrome b (MT-CYB) from Akodon philipmyersi (Myers' grass mouse).